The chain runs to 305 residues: tRNA N6-adenosine threonylcarbamoyltransferase (305 aa).

Positions 108 and 112 each coordinate Fe cation. Residues 130–134, Asp-163, Gly-176, Asp-180, and Asn-264 each bind substrate; that span reads VVSGG. Asp-288 lines the Fe cation pocket.

It belongs to the KAE1 / TsaD family. The cofactor is Fe(2+).

The protein localises to the cytoplasm. It carries out the reaction L-threonylcarbamoyladenylate + adenosine(37) in tRNA = N(6)-L-threonylcarbamoyladenosine(37) in tRNA + AMP + H(+). Required for the formation of a threonylcarbamoyl group on adenosine at position 37 (t(6)A37) in tRNAs that read codons beginning with adenine. Is involved in the transfer of the threonylcarbamoyl moiety of threonylcarbamoyl-AMP (TC-AMP) to the N6 group of A37, together with TsaE and TsaB. TsaD likely plays a direct catalytic role in this reaction. The sequence is that of tRNA N6-adenosine threonylcarbamoyltransferase from Mycoplasma mobile (strain ATCC 43663 / 163K / NCTC 11711) (Mesomycoplasma mobile).